A 20-amino-acid chain; its full sequence is Superoxide dismutase [Fe] (20 aa).

Belongs to the iron/manganese superoxide dismutase family. In terms of assembly, homodimer. Fe cation is required as a cofactor.

It localises to the periplasm. It carries out the reaction 2 superoxide + 2 H(+) = H2O2 + O2. Functionally, destroys superoxide anion radicals which are normally produced within the cells and which are toxic to biological systems. The sequence is that of Superoxide dismutase [Fe] (sodB) from Photobacterium damsela subsp. piscicida (Pasteurella piscicida).